A 143-amino-acid chain; its full sequence is NADH-quinone oxidoreductase subunit A (143 aa).

3 consecutive transmembrane segments (helical) span residues 7–27 (GFGN…GGYL), 63–83 (FYVV…LYPW), and 93–113 (FALF…AYAW).

It belongs to the complex I subunit 3 family. In terms of assembly, NDH-1 is composed of 14 different subunits. Subunits NuoA, H, J, K, L, M, N constitute the membrane sector of the complex.

It localises to the cell inner membrane. The catalysed reaction is a quinone + NADH + 5 H(+)(in) = a quinol + NAD(+) + 4 H(+)(out). In terms of biological role, NDH-1 shuttles electrons from NADH, via FMN and iron-sulfur (Fe-S) centers, to quinones in the respiratory chain. The immediate electron acceptor for the enzyme in this species is believed to be a menaquinone. Couples the redox reaction to proton translocation (for every two electrons transferred, four hydrogen ions are translocated across the cytoplasmic membrane), and thus conserves the redox energy in a proton gradient. The polypeptide is NADH-quinone oxidoreductase subunit A (Chlorobium limicola (strain DSM 245 / NBRC 103803 / 6330)).